The primary structure comprises 175 residues: Secretion monitor (175 aa).

Residues 1–38 (MSIINFWRQFGRRYFWSHLLLGMVAAGIGMPSLVSAHA) form the signal peptide.

This sequence belongs to the SecM family.

Its subcellular location is the cytoplasm. The protein resides in the cytosol. The protein localises to the periplasm. Regulates secA expression by translational coupling of the secM secA operon. Translational pausing at a specific Pro residue 5 residues before the end of the protein may allow disruption of a mRNA repressor helix that normally suppresses secA translation initiation. The sequence is that of Secretion monitor from Proteus mirabilis (strain HI4320).